Consider the following 60-residue polypeptide: Large ribosomal subunit protein uL30 (60 aa).

This sequence belongs to the universal ribosomal protein uL30 family. In terms of assembly, part of the 50S ribosomal subunit.

The polypeptide is Large ribosomal subunit protein uL30 (Bacillus pumilus (strain SAFR-032)).